A 429-amino-acid chain; its full sequence is MKKLNTQSPDFQAGLKALLAFETAQNPETERIVADICADVQKRGDAALIEYTNKFDQTNAKSIDDLILTQADLNAAFERIPNDVQTALQTAARRVESYHQRQKMESWSYTDEDGTLLGQQITPLDRVGIYVPGGKAAYPSSVIMNAMPAHVAGVKEIIMVVPTPKGERNDIVLAAAYVAGVTKVFTVGGAQAIAALAYGTETIPQVDKITGPGNAFVAAAKRRVFGVVGIDMVAGPSEILVIADGTTPADWVAMDLFSQAEHDEIAQAILIGTSQAYLDEVEAAMDRLIETMPRRDIIEASLGNRGAMILVKDLNEACEISNYISPEHLELSVENPQEWAKKIRHAGAIFMGRYTGESLGDYCAGPNHVLPTSRTARFSSPLGTYDFQKRSSLIQVSEQGAQKLGETASVLAHGESLTAHARAAEFRMK.

NAD(+) contacts are provided by Y130, Q191, and N214. S237, Q259, and H262 together coordinate substrate. The Zn(2+) site is built by Q259 and H262. Active-site proton acceptor residues include E327 and H328. Substrate-binding residues include H328, D361, E415, and H420. D361 contacts Zn(2+). H420 provides a ligand contact to Zn(2+).

The protein belongs to the histidinol dehydrogenase family. Requires Zn(2+) as cofactor.

The catalysed reaction is L-histidinol + 2 NAD(+) + H2O = L-histidine + 2 NADH + 3 H(+). Its pathway is amino-acid biosynthesis; L-histidine biosynthesis; L-histidine from 5-phospho-alpha-D-ribose 1-diphosphate: step 9/9. Catalyzes the sequential NAD-dependent oxidations of L-histidinol to L-histidinaldehyde and then to L-histidine. The sequence is that of Histidinol dehydrogenase from Neisseria gonorrhoeae (strain ATCC 700825 / FA 1090).